The primary structure comprises 201 residues: MSKVLVLYYSSYGHVETLANAVAEGVRGVAGTQVDLYRVAELVPDEVAAKSGYKEDTTAAVLDDPSVLAEYDAIVVGTPTRFGNMASQMRNFWDKTGGLWAQGKLIGKLGGAFTSTASQHGGQETTLTSIHTTLLHHGMAVVGVPYSCPALTELDEVSGGTPYGATTIAGGDGSRQPSENELTIARFQGQHIAEMAAKLAG.

The region spanning 4–192 (VLVLYYSSYG…TIARFQGQHI (189 aa)) is the Flavodoxin-like domain. Residues 10-15 (SSYGHV) and 80-82 (TRF) each bind FMN. Tyr-12 contributes to the NAD(+) binding site. Trp-100 is a substrate binding site. FMN-binding positions include 115-121 (STASQHG) and His-136.

This sequence belongs to the WrbA family. The cofactor is FMN.

It carries out the reaction a quinone + NADH + H(+) = a quinol + NAD(+). The catalysed reaction is a quinone + NADPH + H(+) = a quinol + NADP(+). The chain is NAD(P)H dehydrogenase (quinone) from Chromohalobacter salexigens (strain ATCC BAA-138 / DSM 3043 / CIP 106854 / NCIMB 13768 / 1H11).